A 323-amino-acid polypeptide reads, in one-letter code: Fructose-1,6-bisphosphatase class 1 (323 aa).

Residues glutamate 88, aspartate 107, leucine 109, and aspartate 110 each coordinate Mg(2+). Residues 110-113 (DGSS) and asparagine 200 contribute to the substrate site. Glutamate 272 contacts Mg(2+).

It belongs to the FBPase class 1 family. In terms of assembly, homotetramer. It depends on Mg(2+) as a cofactor.

Its subcellular location is the cytoplasm. The catalysed reaction is beta-D-fructose 1,6-bisphosphate + H2O = beta-D-fructose 6-phosphate + phosphate. It functions in the pathway carbohydrate biosynthesis; gluconeogenesis. The sequence is that of Fructose-1,6-bisphosphatase class 1 from Acinetobacter baumannii (strain AYE).